The primary structure comprises 217 residues: Dense granule protein 1 (217 aa).

Positions 1 to 19 (MARQATFIVALCVCGLAIA) are cleaved as a signal peptide. A compositionally biased stretch (polar residues) spans 171-183 (VASEDSALGNSEE). The segment at 171–217 (VASEDSALGNSEEQYVEGTVNGSSDPEQERAGGPLIPEGDEQEVDTE) is disordered. Asn191 carries an N-linked (GlcNAc...) asparagine glycan. Acidic residues predominate over residues 208–217 (EGDEQEVDTE).

Belongs to the Gra7 family.

The protein localises to the secreted. The polypeptide is Dense granule protein 1 (DG1) (Neospora caninum (Coccidian parasite)).